The chain runs to 191 residues: Ion-translocating oxidoreductase complex subunit B (191 aa).

The interval 1–26 (MSLVLVAVLALLGLCLIAGAILGFAA) is hydrophobic. A 4Fe-4S domain is found at 32–90 (EGDPIAEQINALLPQTQCGQCGYPGCKPYAEAIAGGDKINKCPPGGEATIQALADLLDV). [4Fe-4S] cluster-binding residues include Cys-49, Cys-52, Cys-57, Cys-73, Cys-114, Cys-117, Cys-120, Cys-124, Cys-144, Cys-147, Cys-150, and Cys-154. 2 4Fe-4S ferredoxin-type domains span residues 105-134 (MVAF…GAAR) and 135-164 (QMHT…MIEV).

It belongs to the 4Fe4S bacterial-type ferredoxin family. RnfB subfamily. As to quaternary structure, the complex is composed of six subunits: RnfA, RnfB, RnfC, RnfD, RnfE and RnfG. [4Fe-4S] cluster serves as cofactor.

The protein resides in the cell inner membrane. Functionally, part of a membrane-bound complex that couples electron transfer with translocation of ions across the membrane. This is Ion-translocating oxidoreductase complex subunit B from Ectopseudomonas mendocina (strain ymp) (Pseudomonas mendocina).